The sequence spans 464 residues: MSQLITSPKINEKETLKFECETGNYHTFCPISCVSWLYQKIEDSFFLVIGTKTCGYFLQNALGVMIFAEPRYAMAELEEADISAQLNDYKELKRLCLQIKRDRNPSVIVWIGTCTTEIIKMDLEGMAPRLETEIGIPIVVARANGLDYAFTQGEDTVLAAMACRCPDKISTTSDSKNLETPMMIDNTQKNGQNSKALAHPPLVLFGSLPSAVVNVLTLELNKQGITVDGWLPSSRYTDLPALGEDVYVCGVNPFLSRTAMTLMRRKKCKLINAPFPIGPDGTRAWIEKICNVLGVIPTGLEEREKKIWQSLENYLPLVRGKSVFFMGDNLLEISLARFLTRCGMIVYECGVPYLDKRYQASELLLLEQTCLEKNVPMPRIVEKPDNYYQIQRIRELQPDLVITGMALSNPLEARGINTKWSVEFTFAQIHGFANSKDVLELVTRPLRRNMMQQVSNKTLVKPAK.

Positions 29, 54, and 114 each coordinate [4Fe-4S] cluster.

It belongs to the BchN/ChlN family. In terms of assembly, protochlorophyllide reductase is composed of three subunits; ChlL, ChlN and ChlB. Forms a heterotetramer of two ChlB and two ChlN subunits. It depends on [4Fe-4S] cluster as a cofactor.

It is found in the plastid. Its subcellular location is the chloroplast. It carries out the reaction chlorophyllide a + oxidized 2[4Fe-4S]-[ferredoxin] + 2 ADP + 2 phosphate = protochlorophyllide a + reduced 2[4Fe-4S]-[ferredoxin] + 2 ATP + 2 H2O. The protein operates within porphyrin-containing compound metabolism; chlorophyll biosynthesis (light-independent). Component of the dark-operative protochlorophyllide reductase (DPOR) that uses Mg-ATP and reduced ferredoxin to reduce ring D of protochlorophyllide (Pchlide) to form chlorophyllide a (Chlide). This reaction is light-independent. The NB-protein (ChlN-ChlB) is the catalytic component of the complex. This Stigeoclonium helveticum (Green alga) protein is Light-independent protochlorophyllide reductase subunit N.